Consider the following 139-residue polypeptide: MAENSVLTVSIVTPDGQVYDDDQVTMLVVNTKEGELGILPNHVPVIAALAIDEVRVKHSQEEDVIAVNGGFVEFSENTATIVADTAENQSDIDVARAESAKKRAEATIRKAQQAHDNSELRRAQISLRRAINRINVSKH.

Belongs to the ATPase epsilon chain family. F-type ATPases have 2 components, CF(1) - the catalytic core - and CF(0) - the membrane proton channel. CF(1) has five subunits: alpha(3), beta(3), gamma(1), delta(1), epsilon(1). CF(0) has three main subunits: a, b and c.

The protein resides in the cell membrane. In terms of biological role, produces ATP from ADP in the presence of a proton gradient across the membrane. This chain is ATP synthase epsilon chain, found in Pediococcus pentosaceus (strain ATCC 25745 / CCUG 21536 / LMG 10740 / 183-1w).